The sequence spans 211 residues: uncharacterized protein (211 aa).

H54, H56, D58, H59, H129, D148, and H189 together coordinate Zn(2+).

Belongs to the metallo-beta-lactamase superfamily. Glyoxalase II family. Requires Zn(2+) as cofactor.

This is an uncharacterized protein from Aquifex aeolicus (strain VF5).